Reading from the N-terminus, the 320-residue chain is MKIVLAIASLLALSAVYARPSSIKTFEEYKKAFNKSYATFEDEEAARKNFLESVKYVQSNGGAINHLSDLSLDEFKNRFLMSAEAFEHLKTQFDLNAETNACSINGNAPAEIDLRQMRTVTPIRMQGGCGSCWAFSGVAATESAYLAYRNQSLDLAEQELVDCASQHGCHGDTIPRGIEYIQHNGVVQESYYRYVAREQSCRRPNAQRFGISNYCQIYPPNVNKIREALAQTHSAIAVIIGIKDLDAFRHYDGRTIIQRDNGYQPNYHAVNIVGYSNAQGVDYWIVRNSWDTNWGDNGYGYFAANIDLMMIEEYPYVVIL.

The signal sequence occupies residues M1–A18. A propeptide spans R19 to E98 (activation peptide). 3 cysteine pairs are disulfide-bonded: C102–C215, C129–C169, and C163–C201. C132 is an active-site residue. The N-linked (GlcNAc...) asparagine glycan is linked to N150. Residues H268 and N288 contribute to the active site.

Belongs to the peptidase C1 family. N-glycosylated. N-glycanase treatment does not completely remove carbohydrates, suggesting that the protein contains additional glycosylation sites.

It is found in the secreted. The enzyme catalyses Broad endopeptidase specificity.. In terms of biological role, thiol protease, with a preference for substrates with a large hydrophobic side chain in the P2 position, or with basic residues. The sequence is that of Peptidase 1 (DERP1) from Dermatophagoides pteronyssinus (European house dust mite).